The following is a 218-amino-acid chain: UPF0502 protein Mmwyl1_3509 (218 aa).

This sequence belongs to the UPF0502 family.

The protein is UPF0502 protein Mmwyl1_3509 of Marinomonas sp. (strain MWYL1).